Consider the following 409-residue polypeptide: Casein kinase II subunit alpha-1 (409 aa).

The N-terminal stretch at 1–35 is a signal peptide; sequence MIDTLFFLFFLFFDSPLRRLLLLCAVLALRAPTAH. Asn-72 is a glycosylation site (N-linked (GlcNAc...) asparagine). In terms of domain architecture, Protein kinase spans 110 to 395; the sequence is YEVVRKVGRG…AKEAMAHAYF (286 aa). Residues 116 to 124 and Lys-139 each bind ATP; that span reads VGRGKYSEV. The N-linked (GlcNAc...) asparagine glycan is linked to Asn-188. Catalysis depends on Asp-227, which acts as the Proton acceptor.

This sequence belongs to the protein kinase superfamily. Ser/Thr protein kinase family. CK2 subfamily. In terms of assembly, heterotetramer of two catalytic alpha subunits and two regulatory beta subunits. In terms of tissue distribution, seems to be present in all plant organs. But seems to be less expressed than CKA2.

It localises to the nucleus. It is found in the nucleolus. It carries out the reaction L-seryl-[protein] + ATP = O-phospho-L-seryl-[protein] + ADP + H(+). The enzyme catalyses L-threonyl-[protein] + ATP = O-phospho-L-threonyl-[protein] + ADP + H(+). Its activity is regulated as follows. Inhibited by heparin. In terms of biological role, casein kinases are operationally defined by their preferential utilization of acidic proteins such as caseins as substrates. Phosphorylates casein in vitro. The alpha chain contains the catalytic site. The tetrameric holoenzyme CK2, composed of two alpha and two beta subunits, phosphorylates the transcription factor GBFl, resulting in stimulation of its DNA binding activity. CK2 phosphorylates the transcription factor PIF1 after an exposure to light, resulting in a proteasome-dependent degradation of PIF1 and promotion of photomorphogenesis. CK2 phosphorylates translation initiation factors. May participate in the regulation of the initiation of translation. Acts as a circadian clock component that maintains the correct period length through phosphorylation of CCA1. Required for the maintenance and control of genomic stability and chromatin structure. May act as an ectokinase that phosphorylates several extracellular proteins. This chain is Casein kinase II subunit alpha-1, found in Arabidopsis thaliana (Mouse-ear cress).